A 273-amino-acid polypeptide reads, in one-letter code: MSPPPSAHTAASTATPLLDLRITRKLYGDRTILADVPLQVARGEIVCVVGPSGCGKSTLLRIVAGLDTDFRGSVKLGGIALDGPSPRAGVIFQEPRLLPWLSIADNVGFAAGPRGGREPSVARLLDEVGLAGVARQLPATLSGGMAQRAAIARGLFGEPDLLLLDEPFSAVDAITRMRLQTLLLDVVERHRTAAIVVTHDLDEALYLGDRVLMLAPNPGRIDDEIHVEVARPRDRRDPTLAVLRARLLDAFQQLQDRADETKRRTLDLQGAEA.

The region spanning 17-241 (LLDLRITRKL…PRDRRDPTLA (225 aa)) is the ABC transporter domain. 50-57 (GPSGCGKS) is a binding site for ATP.

The protein belongs to the ABC transporter superfamily. Aliphatic sulfonates importer (TC 3.A.1.17.2) family. As to quaternary structure, the complex is composed of two ATP-binding proteins (SsuB), two transmembrane proteins (SsuC) and a solute-binding protein (SsuA).

It is found in the cell inner membrane. The enzyme catalyses ATP + H2O + aliphatic sulfonate-[sulfonate-binding protein]Side 1 = ADP + phosphate + aliphatic sulfonateSide 2 + [sulfonate-binding protein]Side 1.. Part of the ABC transporter complex SsuABC involved in aliphatic sulfonates import. Responsible for energy coupling to the transport system. This is Aliphatic sulfonates import ATP-binding protein SsuB 2 from Burkholderia lata (strain ATCC 17760 / DSM 23089 / LMG 22485 / NCIMB 9086 / R18194 / 383).